An 842-amino-acid polypeptide reads, in one-letter code: Glucans biosynthesis glucosyltransferase H (842 aa).

The next 6 helical transmembrane spans lie at 141 to 161, 194 to 214, 513 to 533, 570 to 590, 615 to 635, and 680 to 700; these read LLLL…TILP, ILLL…TALM, VFLT…FLAL, LFAS…ILIW, VLLA…AFLG, and FLFW…VSVI.

It belongs to the glycosyltransferase 2 family. OpgH subfamily.

The protein resides in the cell inner membrane. The protein operates within glycan metabolism; osmoregulated periplasmic glucan (OPG) biosynthesis. Functionally, involved in the biosynthesis of osmoregulated periplasmic glucans (OPGs). The protein is Glucans biosynthesis glucosyltransferase H of Enterobacter sp. (strain 638).